Consider the following 424-residue polypeptide: GTPase Obg (424 aa).

The Obg domain occupies 1–158 (MFIDTAKIFV…RWIKLELKLL (158 aa)). Residues 159 to 331 (ADVGLIGFPN…LMKEAARLLS (173 aa)) enclose the OBG-type G domain. Residues 165–172 (GFPNVGKS), 190–194 (FTTLK), 212–215 (DIPG), 282–285 (NKSD), and 312–314 (SAA) contribute to the GTP site. Ser-172 and Thr-192 together coordinate Mg(2+). Positions 345–424 (RFIEEEKRFT…LNDFEFDFLL (80 aa)) constitute an OCT domain.

It belongs to the TRAFAC class OBG-HflX-like GTPase superfamily. OBG GTPase family. Monomer. The cofactor is Mg(2+).

The protein localises to the cytoplasm. An essential GTPase which binds GTP, GDP and possibly (p)ppGpp with moderate affinity, with high nucleotide exchange rates and a fairly low GTP hydrolysis rate. Plays a role in control of the cell cycle, stress response, ribosome biogenesis and in those bacteria that undergo differentiation, in morphogenesis control. The sequence is that of GTPase Obg from Clostridium botulinum (strain Okra / Type B1).